We begin with the raw amino-acid sequence, 293 residues long: 33 kDa chaperonin (293 aa).

Intrachain disulfides connect Cys-231/Cys-233 and Cys-264/Cys-267.

It belongs to the HSP33 family. Under oxidizing conditions two disulfide bonds are formed involving the reactive cysteines. Under reducing conditions zinc is bound to the reactive cysteines and the protein is inactive.

The protein localises to the cytoplasm. Its function is as follows. Redox regulated molecular chaperone. Protects both thermally unfolding and oxidatively damaged proteins from irreversible aggregation. Plays an important role in the bacterial defense system toward oxidative stress. In Yersinia pseudotuberculosis serotype O:1b (strain IP 31758), this protein is 33 kDa chaperonin.